A 194-amino-acid chain; its full sequence is Histone H1.0 (194 aa).

Position 1 is an N-acetylmethionine (Met-1). Positions 1 to 11 (MTENSTSAPAA) are enriched in low complexity. Residues 1-29 (MTENSTSAPAAKPKRAKASKKSTDHPKYS) form a disordered region. Thr-2 carries the N-acetylthreonine; in Histone H1.0, N-terminally processed modification. Residues 24-97 (DHPKYSDMVV…GASGSFRLAK (74 aa)) form the H15 domain. A Citrulline modification is found at Arg-42. Residues 84 to 194 (TKGVGASGSF…SSAKRAGKKK (111 aa)) form a disordered region. Ser-104 bears the ADP-ribosylserine mark. The segment covering 105–194 (VAFKKTKKEI…SSAKRAGKKK (90 aa)) has biased composition (basic residues).

This sequence belongs to the histone H1/H5 family. ADP-ribosylated on Ser-104 in response to DNA damage.

The protein localises to the nucleus. It is found in the chromosome. Histones H1 are necessary for the condensation of nucleosome chains into higher-order structures. The histones H1.0 are found in cells that are in terminal stages of differentiation or that have low rates of cell division. This Pongo abelii (Sumatran orangutan) protein is Histone H1.0 (H1-0).